The primary structure comprises 722 residues: Protein Aster-A (722 aa).

The disordered stretch occupies residues Met-1–Thr-62. Positions Ser-8 to Ser-18 are enriched in low complexity. The GRAM domain occupies Glu-93 to Lys-160. Residues Ile-256–Leu-336 are disordered. Ser-265, Ser-269, Ser-273, and Ser-417 each carry phosphoserine. In terms of domain architecture, VASt spans Ser-369–Leu-540. The interval Leu-561 to Gln-600 is disordered. Basic and acidic residues predominate over residues Gly-565–Pro-575. Residues Cys-578 to Ser-594 show a composition bias toward polar residues. The chain crosses the membrane as a helical span at residues Ala-609–Tyr-629.

Highly expressed in the brain.

Its subcellular location is the endoplasmic reticulum membrane. It is found in the cell membrane. The protein resides in the cytoplasmic vesicle. The protein localises to the autophagosome. Functionally, cholesterol transporter that mediates non-vesicular transport of cholesterol from the plasma membrane (PM) to the endoplasmic reticulum (ER). Contains unique domains for binding cholesterol and the PM, thereby serving as a molecular bridge for the transfer of cholesterol from the PM to the ER. Plays a crucial role in cholesterol homeostasis and has the unique ability to localize to the PM based on the level of membrane cholesterol. In lipid-poor conditions localizes to the ER membrane and in response to excess cholesterol in the PM is recruited to the endoplasmic reticulum-plasma membrane contact sites (EPCS) which is mediated by the GRAM domain. At the EPCS, the sterol-binding VASt/ASTER domain binds to the cholesterol in the PM and facilitates its transfer from the PM to ER. May play a role in tumor progression. Plays a role in autophagy regulation and is required for biogenesis of the autophagosome. This function in autophagy requires its cholesterol-transfer activity. This is Protein Aster-A from Mus musculus (Mouse).